Here is a 305-residue protein sequence, read N- to C-terminus: Taste receptor type 2 member 13 (305 aa).

Over 1–7 the chain is Extracellular; it reads MGSSLYD. The chain crosses the membrane as a helical span at residues 8-28; it reads ILTIVMIAEFIFGNVTNGFIV. At 29 to 42 the chain is on the cytoplasmic side; it reads LTNCIAWLSKRTLS. A helical membrane pass occupies residues 43 to 63; the sequence is FIGWIQLFLAISRVVLIWEML. The Extracellular portion of the chain corresponds to 64 to 88; sequence LAWLKYMKYSFSYLAGTELRVMMLT. Residues 89–109 form a helical membrane-spanning segment; that stretch reads WVVSNHFSLWLATILSIFYLL. The Cytoplasmic segment spans residues 110 to 128; it reads KIASFSRPVFLYLKWRVKK. Residues 129–149 form a helical membrane-spanning segment; that stretch reads VLLLILLGNLIFLMFNILQIN. The Extracellular segment spans residues 150–182; that stretch reads THIEDWMDQYKRNITWDSRVNEFVGFSNLVLLE. N162 is a glycosylation site (N-linked (GlcNAc...) asparagine). The chain crosses the membrane as a helical span at residues 183–203; the sequence is MIMFSVTPFTVALVSFILLIF. Topologically, residues 204–232 are cytoplasmic; it reads SLWKHLQKMHLSSRGERDPSTKAHVNALR. A helical membrane pass occupies residues 233-253; the sequence is IMVSFLLLYATYFISFFISLI. Topologically, residues 254 to 262 are extracellular; that stretch reads PMAHKKGLD. A helical membrane pass occupies residues 263 to 283; the sequence is LMFSLTVGLFYPSSHSFILIL. Residues 284-305 lie on the Cytoplasmic side of the membrane; sequence GHSNLRHSSCLVITYLRCKEKD.

This sequence belongs to the G-protein coupled receptor T2R family. In terms of tissue distribution, expressed in subsets of taste receptor cells of the tongue and palate epithelium and exclusively in gustducin-positive cells. Expressed in 15% taste bud cells in circumvallate and foliate papillae but only in 2% in fungiform papillae. Expressed in the duodenum, antrum and fundus (part of the stomach).

Its subcellular location is the membrane. Its function is as follows. Receptor that may play a role in the perception of bitterness and is gustducin-linked. May play a role in sensing the chemical composition of the gastrointestinal content. The activity of this receptor may stimulate alpha gustducin, mediate PLC-beta-2 activation and lead to the gating of TRPM5. This is Taste receptor type 2 member 13 (Tas2r13) from Rattus norvegicus (Rat).